Reading from the N-terminus, the 455-residue chain is Trigger factor (455 aa).

The 94-residue stretch at glycine 169–proline 262 folds into the PPIase FKBP-type domain.

Belongs to the FKBP-type PPIase family. Tig subfamily.

It localises to the cytoplasm. It catalyses the reaction [protein]-peptidylproline (omega=180) = [protein]-peptidylproline (omega=0). In terms of biological role, involved in protein export. Acts as a chaperone by maintaining the newly synthesized protein in an open conformation. Functions as a peptidyl-prolyl cis-trans isomerase. This is Trigger factor from Rippkaea orientalis (strain PCC 8801 / RF-1) (Cyanothece sp. (strain PCC 8801)).